The following is a 1620-amino-acid chain: Myb-like protein X (1620 aa).

Residues 1–13 (MSTIGNNASSIGN) are compositionally biased toward polar residues. Disordered regions lie at residues 1-57 (MSTI…TTTT), 176-204 (TGSGGIGGGGSGSSTPNRGRFSGKTSNIG), 294-318 (FFQDDNENGNGNGNGSGSGSNNMTE), and 450-849 (KEEK…TKSA). Over residues 28–57 (PPTTTTTTTTTTTTTTTTPTTTTPTTTTTT) the composition is skewed to low complexity. The span at 177-187 (GSGGIGGGGSG) shows a compositional bias: gly residues. One can recognise an SWIRM domain in the interval 310-421 (GSGSNNMTEI…CFVNSGDYMN (112 aa)). The span at 450–497 (KEEKERLEREEKERLEREEKQEKEEKERLEKEEKERLEREEKQEKEEK) shows a compositional bias: basic and acidic residues. Residues 498 to 511 (EEKEEKEENEEKEE) show a composition bias toward acidic residues. The segment covering 512 to 568 (KEEKEKEEKEEKEKQEKEDDKEKQENENEQEKIEKKENKNDSQNKEIKENHDKKDET) has biased composition (basic and acidic residues). A compositionally biased stretch (low complexity) spans 570 to 598 (DSNNTTTTTTTTTTTSTNTLVAESSSSSS). Positions 606-628 (KEMKEQPVQENKDKEMMETDTTK) are enriched in basic and acidic residues. Residues 629–645 (ENNGVETTETTNQTTDS) are compositionally biased toward low complexity. Over residues 647-798 (ETDKEMKDQP…EIKKDKLKEN (152 aa)) the composition is skewed to basic and acidic residues. Positions 799-834 (EEVEGEIEGENDEGEVVEEDEDEEMEIEEDEEDEED) are enriched in acidic residues. The region spanning 925–977 (PEEFGWTDIETLLLLEGIEIFRDNWQEISDYIGGSKTPEQCLTHFIRLPIEDE) is the SANT domain. The interval 1049–1506 (QPSKEELERI…DDDEDVEMET (458 aa)) is disordered. 3 stretches are compositionally biased toward basic and acidic residues: residues 1051–1195 (SKEE…DKSD), 1219–1255 (ETVEMNQDDHVKIDEKETKENDKKSITEEENQQKDDN), and 1264–1302 (HNKEIEKDDNKENENEKEKENENKNEKQIENENEKEKDL). Residues 1303–1325 (NNLSESQSSNDQSKSNEQMSSDN) are compositionally biased toward low complexity. The segment covering 1338 to 1350 (TQITSKEQNITTD) has biased composition (polar residues). Composition is skewed to low complexity over residues 1358–1382 (TPTTTTPATLPATPISESNTTTTNT) and 1390–1416 (NETNKTNENNSNNNNTNEENKTAESNN). 2 stretches are compositionally biased toward acidic residues: residues 1467 to 1481 (EENEMEEVEEEENDL) and 1493 to 1504 (VGEEDDDEDVEM).

Its subcellular location is the nucleus. In Dictyostelium discoideum (Social amoeba), this protein is Myb-like protein X (mybX).